The following is a 232-amino-acid chain: Large ribosomal subunit protein uL1 (232 aa).

This sequence belongs to the universal ribosomal protein uL1 family. In terms of assembly, part of the 50S ribosomal subunit.

In terms of biological role, binds directly to 23S rRNA. The L1 stalk is quite mobile in the ribosome, and is involved in E site tRNA release. Protein L1 is also a translational repressor protein, it controls the translation of the L11 operon by binding to its mRNA. In Francisella tularensis subsp. holarctica (strain LVS), this protein is Large ribosomal subunit protein uL1.